Consider the following 311-residue polypeptide: AT-hook motif nuclear-localized protein 27 (311 aa).

The tract at residues 40–105 (HHHQHQQHQQ…KNKAKPPIIV (66 aa)) is disordered. Positions 55-75 (DDSRESDHSNKDHHQQGRPDS) are enriched in basic and acidic residues. Positions 86–98 (KRPRGRPPGSKNK) form a DNA-binding region, a.T hook. Residues 110–258 (PNALRSHVLE…EEGGGGGGGG (149 aa)) form the PPC domain. The tract at residues 178–183 (GRFEIL) is required for the binding to non-AHL interactors. A disordered region spans residues 246–311 (EEEEEGGGGG…GAGTPSRPPF (66 aa)). Positions 252–262 (GGGGGGGGGGP) are enriched in gly residues. Residues 263-277 (PQMQQAPSASPPSGV) show a composition bias toward low complexity. Gly residues predominate over residues 278–292 (TGQGQLGGNVGGYGF).

In terms of assembly, homodimer. Interacts with AHL12, AHL25, AHL29, TCP4, TCP13, EF114, ATAF2/NAC081, histone H2B.1, histone H3.3 and histone H4. As to expression, expressed in the hypocotyl and the vascular tissue of seedling.

It localises to the nucleus. Transcription factor that specifically binds AT-rich DNA sequences related to the nuclear matrix attachment regions (MARs). Negatively regulates plant innate immunity (PTI) to pathogens through the down-regulation of the PAMP-triggered FRK1 expression. Acts redundantly with AHL18, AHL22 and AHL29 in the regulation of flowering and regulation of the hypocotyl elongation. Acts as a chromatin remodeling factor that negatively regulates the leaf senescence. Acts redundantly with AHL29/SOB3 to modulate hypocotyl growth inhibition in response to light. This is AT-hook motif nuclear-localized protein 27 from Arabidopsis thaliana (Mouse-ear cress).